A 320-amino-acid polypeptide reads, in one-letter code: MPDPMRSYLDFEKPVAELDSKVDELRAMAASGTDIGEEVSRIEEKAGQALADLYANLTPWQKTMVARHPQRPHFTDFVNALITEFTPLAGDRKFGEDAALLGGFGRFRGEPICVMGQEKGATTESRLKHNFGMARPEGYRKAVRLMEMAERFGLPVLSLVDSAGAYPGIGAEERGQAEAIARSTDACLALGVPNVAIITGEGMSGGAIALTTANKVLMLEHAIYSVISPEAASSILWRDGTKAQEAANSMKITAQDMLRFGVVDTILKEPVGGAHRDPAAMIAATGDAIAQAFDELKGLDAAAIRKQRRQKFIEIGRKLS.

Positions 41–295 (RIEEKAGQAL…GDAIAQAFDE (255 aa)) constitute a CoA carboxyltransferase C-terminal domain.

The protein belongs to the AccA family. As to quaternary structure, acetyl-CoA carboxylase is a heterohexamer composed of biotin carboxyl carrier protein (AccB), biotin carboxylase (AccC) and two subunits each of ACCase subunit alpha (AccA) and ACCase subunit beta (AccD).

The protein resides in the cytoplasm. The catalysed reaction is N(6)-carboxybiotinyl-L-lysyl-[protein] + acetyl-CoA = N(6)-biotinyl-L-lysyl-[protein] + malonyl-CoA. Its pathway is lipid metabolism; malonyl-CoA biosynthesis; malonyl-CoA from acetyl-CoA: step 1/1. Component of the acetyl coenzyme A carboxylase (ACC) complex. First, biotin carboxylase catalyzes the carboxylation of biotin on its carrier protein (BCCP) and then the CO(2) group is transferred by the carboxyltransferase to acetyl-CoA to form malonyl-CoA. The protein is Acetyl-coenzyme A carboxylase carboxyl transferase subunit alpha of Bradyrhizobium sp. (strain ORS 278).